A 197-amino-acid chain; its full sequence is Adenine phosphoribosyltransferase (197 aa).

This sequence belongs to the purine/pyrimidine phosphoribosyltransferase family. As to quaternary structure, homodimer.

The protein resides in the cytoplasm. It carries out the reaction AMP + diphosphate = 5-phospho-alpha-D-ribose 1-diphosphate + adenine. It functions in the pathway purine metabolism; AMP biosynthesis via salvage pathway; AMP from adenine: step 1/1. In terms of biological role, catalyzes a salvage reaction resulting in the formation of AMP, that is energically less costly than de novo synthesis. This Ralstonia nicotianae (strain ATCC BAA-1114 / GMI1000) (Ralstonia solanacearum) protein is Adenine phosphoribosyltransferase.